The following is a 429-amino-acid chain: tRNA-2-methylthio-N(6)-dimethylallyladenosine synthase (429 aa).

Residues 2–115 (KLLYLQTLGC…ISEAVKTPKF (114 aa)) form the MTTase N-terminal domain. Positions 11, 46, 78, 147, 151, and 154 each coordinate [4Fe-4S] cluster. The 233-residue stretch at 133–365 (RGSPYKAFVN…QSRHNEILDE (233 aa)) folds into the Radical SAM core domain. Residues 368 to 429 (KNQVGKIFDV…RMVLYGKITA (62 aa)) enclose the TRAM domain.

It belongs to the methylthiotransferase family. MiaB subfamily. Monomer. [4Fe-4S] cluster is required as a cofactor.

It is found in the cytoplasm. It catalyses the reaction N(6)-dimethylallyladenosine(37) in tRNA + (sulfur carrier)-SH + AH2 + 2 S-adenosyl-L-methionine = 2-methylsulfanyl-N(6)-dimethylallyladenosine(37) in tRNA + (sulfur carrier)-H + 5'-deoxyadenosine + L-methionine + A + S-adenosyl-L-homocysteine + 2 H(+). Catalyzes the methylthiolation of N6-(dimethylallyl)adenosine (i(6)A), leading to the formation of 2-methylthio-N6-(dimethylallyl)adenosine (ms(2)i(6)A) at position 37 in tRNAs that read codons beginning with uridine. This Campylobacter hominis (strain ATCC BAA-381 / DSM 21671 / CCUG 45161 / LMG 19568 / NCTC 13146 / CH001A) protein is tRNA-2-methylthio-N(6)-dimethylallyladenosine synthase.